The chain runs to 1687 residues: MAENLSDQDCFEKLSSSKEGQHWFCSGLLTQYIQPTFFWFAHDETPSFKWVLNAYHERLRSCTSCIQAYYELRNESLAKGSYSFTGFSITDLQEKWNKWDIIRVLEDFKALEDETIDFTSLPCLIFETLLNPKLFTCKNIYKNAIDAFNGLLSDWCSNIFLPGYLLFFYEASHPDVLEWVHSFFKENTEIRISSATVDAVFNTVVFESQNSSDSDCNFVSISSPEFWERTYMFLELLPLQSITAACESILKDYLLNLVKTSESLSSQQMSCLRICCNSSSFWSAADSFKEVSSFLKNLLKNVTATPFEVSDMNWAYIIASFFRTCLNDFVSVFPEWLKGFVEEKRTIGFIIYSVLDALFDLLSLDYSSPSFLNNTLSLMNANSITILQDYPEYMLKLRLHSLLYDIAFISWSHKAITKNPSFVFDPSYELSPFWKLDNLQEEKISDVLFSKISSCCFAHDIEISENSTPSGTMVQFAELWQVMSEYISGFLKGFSEKSSTEISNMLGDSSKFDTVVSFLLSPTQPLYVSAFHIVQIITNCTKNRNEALKKLVAMDFRGIVHGLADAVLNWQSILSFFPALRIMRFLSITNKSLSSDNSAFTENDIPTLGAYWQCIWNILDLVFSNVARWSLNNPADTVKALMKLTLKFVDDLFQNDGIFIKLLAKFDSLILLGETSESLFSFIMWLKINDLELRGIVINSLCKLFTKFSNFDYLFEDRTVTFLTDFIIRKQKAHLSADQCKQLANVLTQASPEAKTVLEQHRLSEMRKTKKQTELTNSAHVIKPSPTPQITVKQNTTKSSSAPRMGMLEQLKQEYLTKRNFESKLKSSAVSSRKPTFNEVKPANLLAEDLSDNEDDIDRKQGLFSLAKANKIPEIRQQERRQVQLLSNSTIKMHPSQIRMMTNRNVANVKARLFPSMTDFYKEILSWEPANQSPNPVLKFHKLDGKIIDSFKTVEHYMEVLQPMIFMECWSQIQSTKLDLKFSPVEGIMVERTAVNNFVDIGVSVAPKDLYGYPLYDTEVVSLAFNKEDASSMKGLCCFAKVERIVRQTNGVLVVLRTLPSMEILNKLQGNCALWFLKLTNLATFTRQYAGIRGLPYFHLADDIIRARPCSQPVKHSSSEIKAAMKRYQVNEPQAKAIMCALDNNGFTLIQGPPGTGKTKTIIGIISALLVDLSRYHITRPNQQSKSTESKQQILLCAPSNAAVDEVLLRLKRGFLLENGEKYIPRVVRIGNPETINVSVRDLSLEYQTEKQLLEVNQGAIDLGSLQELTRWRDTFYDCIQKIEELEKQIDVARDVAEDTKSLGKELQNKINEKNLAEQKVEELQSQSFTKNKEVDLLRKKAQKAILKQADVVCATLSGSGHDLVAHSSLNFSTVIIDEAAQAVELDTIIPLRYGAKKCILVGDPNQLPPTVLSKKAASLNYSQSLFVRIQKNFSNQMCLLSIQYRMHPDISHFPSKKFYDSRLEDGDNMAEKTQQVWHVNPKFTQYRLFDVRGKERTSNTMSTYNLEEVEYLVNMVDELLNKFPDVNFTGRIGVITPYRSQLHELRRAFKVKYGKSFMSTIDIQTVDGFQGQEKDIIFFSCVKSYSKHGIGFLRDFRRLNVALTRARSSLLIIGNMETLKTDDLWGSLVDDALSRKLVESPHIDSEGRLITISRTSEKRMKNEEFVEPPSKKLANSEPSKEIRQRS.

Residues 781-801 (VIKPSPTPQITVKQNTTKSSS) are disordered. The segment covering 788-801 (PQITVKQNTTKSSS) has biased composition (polar residues). Residues Gln1134, 1155–1159 (GTGKT), Gln1407, Tyr1445, and Glu1574 each bind ATP. Residues 1661-1687 (MKNEEFVEPPSKKLANSEPSKEIRQRS) are disordered.

It belongs to the DNA2/NAM7 helicase family. Monomer.

Its subcellular location is the nucleus. Functionally, ATP-dependent 5'-&gt;3' DNA/RNA helicase required for the expression and maturation of diverse classes of non-protein-coding RNAs like precursor tRNAs, rRNAs and small nuclear (snRNA) and nucleolar (snoRNA) RNAs. Directs RNA polymerase II transcription termination on snoRNAs as well as on several short protein-coding genes. May also play a role in transcription-coupled nucleotide excision repair. The sequence is that of Helicase sen1 (sen1) from Schizosaccharomyces pombe (strain 972 / ATCC 24843) (Fission yeast).